We begin with the raw amino-acid sequence, 842 residues long: DNA topoisomerase-like protein cin-4 (842 aa).

Over residues 1-26 (MSEEDRNVFTSIDKKGGGSKQMDDLN) the composition is skewed to basic and acidic residues. The disordered stretch occupies residues 1–50 (MSEEDRNVFTSIDKKGGGSKQMDDLNQKCPKRKTSKLKGIPKLEDANDAG). The Topo IIA-type catalytic domain maps to 314–783 (IPCLVDGLKP…TWQDLWITDL (470 aa)).

Belongs to the type II topoisomerase family.

Functionally, plays a role in the removal of cohesin from kinetochores on mitotic chromosomes and is required for centromere resolution. The protein is DNA topoisomerase-like protein cin-4 of Caenorhabditis elegans.